The primary structure comprises 83 residues: Phytosulfokines 4 (83 aa).

The first 28 residues, 1–28, serve as a signal peptide directing secretion; that stretch reads MAARTVAVAAALAVLLIFAASSATVAMA. A propeptide spanning residues 29–74 is cleaved from the precursor; sequence GRPTPTTSLDEEAAQAAAQSEIGGGCKEGEGEEECLARRTLTAHTD. A sulfotyrosine mark is found at Tyr-75 and Tyr-77. Residues 80-83 constitute a propeptide that is removed on maturation; it reads QHHN.

This sequence belongs to the phytosulfokine family. Sulfation is important for activity and for the binding to a putative membrane receptor. In terms of processing, PSK-alpha is produced by endopeptidase digestion. PSK-beta is produced from PSK-alpha by exopeptidase digestion.

It localises to the secreted. In terms of biological role, promotes plant cell differentiation, organogenesis and somatic embryogenesis as well as cell proliferation. The protein is Phytosulfokines 4 (PSK4) of Oryza sativa subsp. japonica (Rice).